Reading from the N-terminus, the 456-residue chain is Shufflon protein D' (456 aa).

The constant region stretch occupies residues 1 to 361 (MKKYDRGWAS…TGAILSCQSG (361 aa)). Residues 362-456 (TWRKSNSGST…KCSYVVACQN (95 aa)) form a variable region region.

In Escherichia coli, this protein is Shufflon protein D'.